We begin with the raw amino-acid sequence, 240 residues long: Ribonuclease HII (240 aa).

Positions 33 to 222 (GPVAGVDEVG…VRRIVTRSNT (190 aa)) constitute an RNase H type-2 domain. A divalent metal cation is bound by residues Asp39, Glu40, and Asp131.

Belongs to the RNase HII family. Mn(2+) serves as cofactor. Mg(2+) is required as a cofactor.

Its subcellular location is the cytoplasm. It carries out the reaction Endonucleolytic cleavage to 5'-phosphomonoester.. Its function is as follows. Endonuclease that specifically degrades the RNA of RNA-DNA hybrids. The protein is Ribonuclease HII of Mycobacterium leprae (strain Br4923).